The sequence spans 509 residues: ATP synthase subunit alpha (509 aa).

Residue 169 to 176 (GDRQTGKT) participates in ATP binding.

It belongs to the ATPase alpha/beta chains family. As to quaternary structure, F-type ATPases have 2 components, CF(1) - the catalytic core - and CF(0) - the membrane proton channel. CF(1) has five subunits: alpha(3), beta(3), gamma(1), delta(1), epsilon(1). CF(0) has three main subunits: a(1), b(2) and c(9-12). The alpha and beta chains form an alternating ring which encloses part of the gamma chain. CF(1) is attached to CF(0) by a central stalk formed by the gamma and epsilon chains, while a peripheral stalk is formed by the delta and b chains.

It localises to the cell inner membrane. It carries out the reaction ATP + H2O + 4 H(+)(in) = ADP + phosphate + 5 H(+)(out). In terms of biological role, produces ATP from ADP in the presence of a proton gradient across the membrane. The alpha chain is a regulatory subunit. The polypeptide is ATP synthase subunit alpha (Novosphingobium aromaticivorans (strain ATCC 700278 / DSM 12444 / CCUG 56034 / CIP 105152 / NBRC 16084 / F199)).